The sequence spans 358 residues: Thiol protease aleurain-like (358 aa).

A signal peptide spans 1 to 21 (MSVKLNLSSSILLILFAAAAS). Residues 22–140 (KEIGFDESNP…KGSHKITEAT (119 aa)) constitute a propeptide, activation peptide. A glycan (N-linked (GlcNAc...) asparagine) is linked at Asn125. Cystine bridges form between Cys162-Cys205 and Cys196-Cys238. Cys165 is an active-site residue. Asn254 is a glycosylation site (N-linked (GlcNAc...) asparagine). The cysteines at positions 296 and 346 are disulfide-linked. Active-site residues include His305 and Asn325.

This sequence belongs to the peptidase C1 family.

The protein localises to the vacuole. It carries out the reaction Hydrolysis of proteins, acting as an aminopeptidase (notably, cleaving Arg-|-Xaa bonds) as well as an endopeptidase.. In terms of biological role, may play a role in proteolysis leading to mobilization of nitrogen during senescence and starvation. The chain is Thiol protease aleurain-like from Arabidopsis thaliana (Mouse-ear cress).